Consider the following 367-residue polypeptide: MRAAGPWRAASPAPCTRYLARCKPGFRPSSSFVVDLLVDSGDPGLEDVALTECLSPPSLSCSNSTLSLLSPLGHQSFPFGADDSEGEDEEALDEDARESESKVESLEGIEFQQRSSCEVESQDKQEKLVLLQHGSLTPWEMWFVGKEKEERGRLQQKFLEELNQQIEKRKEMEEREKRKIIAEVKHKEWVQKKNKQERKEREQKINKEMEEKEAKKREKEHLQEKAKEKYQEWLKKKKAEEYEKKKKEKEKEKQRQAELQEKKEIAEKKFKEWLENAKNKPRPAAKSYGYSSGKLTGFYSGNSYPEPTFYNPIPWKPIHMPPPKEAKSGPGKKSKRHAASQPLPSSSLAVHNAKSSLCLGALCRGQR.

A Phosphoserine modification is found at S55. Disordered regions lie at residues 77 to 105 (FPFGADDSEGEDEEALDEDARESESKVES), 191 to 228 (QKKNKQERKEREQKINKEMEEKEAKKREKEHLQEKAKE), and 310 to 349 (YNPIPWKPIHMPPPKEAKSGPGKKSKRHAASQPLPSSSLA). Over residues 82–97 (DDSEGEDEEALDEDAR) the composition is skewed to acidic residues. Coiled coils occupy residues 87 to 108 (EDEEALDEDARESESKVESLEG) and 153 to 280 (RLQQ…AKNK). Residues 197–228 (ERKEREQKINKEMEEKEAKKREKEHLQEKAKE) show a composition bias toward basic and acidic residues. Residues 339-349 (ASQPLPSSSLA) show a composition bias toward low complexity.

In terms of tissue distribution, expressed in testis and sperm.

It is found in the cell projection. It localises to the cilium. The protein resides in the flagellum. Its function is as follows. Involved in spermatogenesis. Has a probable role in anterograde intraflagellar transport which is essential for the formation of sperm flagella. The protein is Coiled-coil domain-containing protein 34 (Ccdc34) of Mus musculus (Mouse).